Here is an 886-residue protein sequence, read N- to C-terminus: Inter-alpha-trypsin inhibitor heavy chain H3 (886 aa).

The signal sequence occupies residues 1-18; it reads MWWPYLVLALLSGLEASG. The propeptide occupies 19–30; it reads FPRSPLRLLGKR. The region spanning 26–155 is the VIT domain; that stretch reads LLGKRSLPEG…KVTFELTYEE (130 aa). N88 carries N-linked (GlcNAc...) asparagine glycosylation. The VWFA domain occupies 279 to 439; that stretch reads PKNIVFVIDI…YNFLETMALE (161 aa). N577 carries N-linked (GlcNAc...) asparagine glycosylation. D646 carries the aspartate 1-(chondroitin 4-sulfate)-ester modification. Positions 647 to 886 are excised as a propeptide; the sequence is PHFIIQVPGK…HTDYIVPSLF (240 aa).

Belongs to the ITIH family. In terms of assembly, I-alpha-I plasma protease inhibitors are assembled from one or two heavy chains (HC) and one light chain, bikunin. Pre-alpha-inhibitor (P-alpha-I) is composed of ITIH3/HC3 and bikunin. In terms of processing, heavy chains are linked to bikunin via chondroitin 4-sulfate esterified to the alpha-carboxyl of the C-terminal aspartate after propeptide cleavage.

It localises to the secreted. Its function is as follows. May act as a carrier of hyaluronan in serum or as a binding protein between hyaluronan and other matrix protein, including those on cell surfaces in tissues to regulate the localization, synthesis and degradation of hyaluronan which are essential to cells undergoing biological processes. This chain is Inter-alpha-trypsin inhibitor heavy chain H3 (ITIH3), found in Mesocricetus auratus (Golden hamster).